The primary structure comprises 205 residues: Probable GTP-binding protein EngB (205 aa).

One can recognise an EngB-type G domain in the interval 22 to 194; that stretch reads ELPEIAFAGR…WESILDLCEI (173 aa). Residues 30-37, 57-61, 75-78, 142-145, and 173-175 each bind GTP; these read GRSNVGKS, GRTQL, DLPG, TKAD, and FSA. Positions 37 and 59 each coordinate Mg(2+).

This sequence belongs to the TRAFAC class TrmE-Era-EngA-EngB-Septin-like GTPase superfamily. EngB GTPase family. Mg(2+) serves as cofactor.

In terms of biological role, necessary for normal cell division and for the maintenance of normal septation. The polypeptide is Probable GTP-binding protein EngB (Desulfatibacillum aliphaticivorans).